The sequence spans 519 residues: AarF domain-containing protein kinase 1 (519 aa).

The Protein kinase domain occupies 145–481; that stretch reads SFEDTPLGAA…SLYRRVHISL (337 aa). Residues 151–159 and K173 each bind ATP; that span reads LGAASLAQV. The active-site Proton acceptor is D305.

This sequence belongs to the protein kinase superfamily. ADCK protein kinase family.

Its subcellular location is the mitochondrion. Its function is as follows. Appears to be essential for maintaining mitochondrial cristae formation and mitochondrial function by acting via YME1L1 in a kinase-independent manner to regulate essential mitochondrial structural proteins OPA1 and IMMT. The action of this enzyme is not yet clear. It is not known if it has protein kinase activity and what type of substrate it would phosphorylate (Ser, Thr or Tyr). The polypeptide is AarF domain-containing protein kinase 1 (ADCK1) (Gallus gallus (Chicken)).